Reading from the N-terminus, the 211-residue chain is Ribosomal RNA small subunit methyltransferase G (211 aa).

S-adenosyl-L-methionine contacts are provided by residues Gly-78, Met-83, 129–130 (AE), and Arg-144.

The protein belongs to the methyltransferase superfamily. RNA methyltransferase RsmG family.

It is found in the cytoplasm. It catalyses the reaction guanosine(527) in 16S rRNA + S-adenosyl-L-methionine = N(7)-methylguanosine(527) in 16S rRNA + S-adenosyl-L-homocysteine. In terms of biological role, specifically methylates the N7 position of guanine in position 527 of 16S rRNA. This Pseudomonas syringae pv. tomato (strain ATCC BAA-871 / DC3000) protein is Ribosomal RNA small subunit methyltransferase G.